Here is a 496-residue protein sequence, read N- to C-terminus: Angiopoietin-2 (496 aa).

A signal peptide spans 1–18 (MWQIIFLTFGWDLVLASA). N-linked (GlcNAc...) asparagine glycans are attached at residues Asn-89, Asn-119, Asn-133, Asn-151, Asn-240, and Asn-304. Residues 159-256 (QLLQHSISTN…QQHDLMETVN (98 aa)) are a coiled coil. One can recognise a Fibrinogen C-terminal domain in the interval 275-495 (KEEQTTFRDC…ATTMMIRPAD (221 aa)). A disulfide bridge connects residues Cys-284 and Cys-313. Ca(2+) contacts are provided by Asp-429, Asp-431, Cys-433, and Cys-435. 2 cysteine pairs are disulfide-bonded: Cys-433–Cys-435 and Cys-437–Cys-450.

In terms of assembly, interacts with TEK/TIE2, competing for the same binding site as ANGPT1. Interacts with ITGA5. Interacts with SVEP1/polydom. Interacts with THBD; this interaction significantly inhibits the generation of activated PC and TAFIa/CPB2 by the thrombin/thrombomodulin complex. In terms of tissue distribution, expressed in the ovary, uterus and placenta.

Its subcellular location is the secreted. Functionally, binds to TEK/TIE2, competing for the ANGPT1 binding site, and modulating ANGPT1 signaling. Can induce tyrosine phosphorylation of TEK/TIE2 in the absence of ANGPT1. In the absence of angiogenic inducers, such as VEGF, ANGPT2-mediated loosening of cell-matrix contacts may induce endothelial cell apoptosis with consequent vascular regression. In concert with VEGF, it may facilitate endothelial cell migration and proliferation, thus serving as a permissive angiogenic signal. Involved in the regulation of lymphangiogenesis. In Mus musculus (Mouse), this protein is Angiopoietin-2 (Angpt2).